A 140-amino-acid polypeptide reads, in one-letter code: Putative pre-16S rRNA nuclease (140 aa).

The protein belongs to the YqgF nuclease family.

It is found in the cytoplasm. Could be a nuclease involved in processing of the 5'-end of pre-16S rRNA. The chain is Putative pre-16S rRNA nuclease from Vibrio vulnificus (strain YJ016).